Consider the following 45-residue polypeptide: Large ribosomal subunit protein bL34 (45 aa).

Composition is skewed to basic residues over residues 1 to 15 and 22 to 45; these read MKAKSHLSNKKRKRA and MKTKAGRKILARRRAKGRKRIAIK. Residues 1–45 are disordered; that stretch reads MKAKSHLSNKKRKRASGFLARMKTKAGRKILARRRAKGRKRIAIK.

This sequence belongs to the bacterial ribosomal protein bL34 family.

This chain is Large ribosomal subunit protein bL34, found in Sulfurihydrogenibium sp. (strain YO3AOP1).